Here is a 209-residue protein sequence, read N- to C-terminus: Uracil phosphoribosyltransferase (209 aa).

Residues Arg79, Arg104, and 131-139 (DPMLATGNS) each bind 5-phospho-alpha-D-ribose 1-diphosphate. Residues Ile194 and 199-201 (GDA) each bind uracil. Asp200 contacts 5-phospho-alpha-D-ribose 1-diphosphate.

It belongs to the UPRTase family. The cofactor is Mg(2+).

It catalyses the reaction UMP + diphosphate = 5-phospho-alpha-D-ribose 1-diphosphate + uracil. The protein operates within pyrimidine metabolism; UMP biosynthesis via salvage pathway; UMP from uracil: step 1/1. Allosterically activated by GTP. Functionally, catalyzes the conversion of uracil and 5-phospho-alpha-D-ribose 1-diphosphate (PRPP) to UMP and diphosphate. This chain is Uracil phosphoribosyltransferase, found in Acidovorax sp. (strain JS42).